A 100-amino-acid polypeptide reads, in one-letter code: Large ribosomal subunit protein uL23 (100 aa).

Belongs to the universal ribosomal protein uL23 family. In terms of assembly, part of the 50S ribosomal subunit. Contacts protein L29, and trigger factor when it is bound to the ribosome.

Its function is as follows. One of the early assembly proteins it binds 23S rRNA. One of the proteins that surrounds the polypeptide exit tunnel on the outside of the ribosome. Forms the main docking site for trigger factor binding to the ribosome. This Aeromonas hydrophila subsp. hydrophila (strain ATCC 7966 / DSM 30187 / BCRC 13018 / CCUG 14551 / JCM 1027 / KCTC 2358 / NCIMB 9240 / NCTC 8049) protein is Large ribosomal subunit protein uL23.